Consider the following 64-residue polypeptide: Large ribosomal subunit protein bL33c (64 aa).

The protein belongs to the bacterial ribosomal protein bL33 family.

The protein localises to the plastid. Its subcellular location is the chloroplast. This is Large ribosomal subunit protein bL33c (rpl33) from Cyanidium caldarium (Red alga).